The primary structure comprises 453 residues: Bifunctional protein GlmU (453 aa).

Residues 1–231 (MERTCLAVIL…EIEMTGCNNR (231 aa)) form a pyrophosphorylase region. UDP-N-acetyl-alpha-D-glucosamine is bound by residues 10–13 (LAAG), K24, Q77, 82–83 (GT), 105–107 (YGD), G143, E157, N172, and N229. Position 107 (D107) interacts with Mg(2+). N229 lines the Mg(2+) pocket. Residues 232–252 (AELAVIERFWQERRRREMMLA) form a linker region. Positions 253 to 453 (GVTMIAPETV…AIKAAKKAEA (201 aa)) are N-acetyltransferase. UDP-N-acetyl-alpha-D-glucosamine-binding residues include R318 and K336. The Proton acceptor role is filled by H348. Y351 and N362 together coordinate UDP-N-acetyl-alpha-D-glucosamine. Acetyl-CoA-binding positions include A365, 371–372 (NY), S390, S408, and R425.

This sequence in the N-terminal section; belongs to the N-acetylglucosamine-1-phosphate uridyltransferase family. In the C-terminal section; belongs to the transferase hexapeptide repeat family. Homotrimer. Mg(2+) serves as cofactor.

Its subcellular location is the cytoplasm. The enzyme catalyses alpha-D-glucosamine 1-phosphate + acetyl-CoA = N-acetyl-alpha-D-glucosamine 1-phosphate + CoA + H(+). It catalyses the reaction N-acetyl-alpha-D-glucosamine 1-phosphate + UTP + H(+) = UDP-N-acetyl-alpha-D-glucosamine + diphosphate. It participates in nucleotide-sugar biosynthesis; UDP-N-acetyl-alpha-D-glucosamine biosynthesis; N-acetyl-alpha-D-glucosamine 1-phosphate from alpha-D-glucosamine 6-phosphate (route II): step 2/2. The protein operates within nucleotide-sugar biosynthesis; UDP-N-acetyl-alpha-D-glucosamine biosynthesis; UDP-N-acetyl-alpha-D-glucosamine from N-acetyl-alpha-D-glucosamine 1-phosphate: step 1/1. It functions in the pathway bacterial outer membrane biogenesis; LPS lipid A biosynthesis. Catalyzes the last two sequential reactions in the de novo biosynthetic pathway for UDP-N-acetylglucosamine (UDP-GlcNAc). The C-terminal domain catalyzes the transfer of acetyl group from acetyl coenzyme A to glucosamine-1-phosphate (GlcN-1-P) to produce N-acetylglucosamine-1-phosphate (GlcNAc-1-P), which is converted into UDP-GlcNAc by the transfer of uridine 5-monophosphate (from uridine 5-triphosphate), a reaction catalyzed by the N-terminal domain. This Rhizobium etli (strain ATCC 51251 / DSM 11541 / JCM 21823 / NBRC 15573 / CFN 42) protein is Bifunctional protein GlmU.